The following is a 396-amino-acid chain: L-lactate dehydrogenase (396 aa).

Residues methionine 1 to aspartate 380 enclose the FMN hydroxy acid dehydrogenase domain. Residue tyrosine 24 coordinates substrate. FMN-binding residues include serine 106 and glutamine 127. Residue tyrosine 129 participates in substrate binding. Threonine 155 is a binding site for FMN. Arginine 164 provides a ligand contact to substrate. Lysine 251 is an FMN binding site. Histidine 275 (proton acceptor) is an active-site residue. Arginine 278 lines the substrate pocket. Residue aspartate 306–arginine 330 coordinates FMN.

This sequence belongs to the FMN-dependent alpha-hydroxy acid dehydrogenase family. The cofactor is FMN.

The protein localises to the cell inner membrane. The catalysed reaction is (S)-lactate + A = pyruvate + AH2. Its function is as follows. Catalyzes the conversion of L-lactate to pyruvate. Is coupled to the respiratory chain. The polypeptide is L-lactate dehydrogenase (Escherichia fergusonii (strain ATCC 35469 / DSM 13698 / CCUG 18766 / IAM 14443 / JCM 21226 / LMG 7866 / NBRC 102419 / NCTC 12128 / CDC 0568-73)).